Reading from the N-terminus, the 88-residue chain is Small ribosomal subunit protein uS19 (88 aa).

The protein belongs to the universal ribosomal protein uS19 family.

Its function is as follows. Protein S19 forms a complex with S13 that binds strongly to the 16S ribosomal RNA. The protein is Small ribosomal subunit protein uS19 of Mycoplasma mycoides subsp. mycoides SC (strain CCUG 32753 / NCTC 10114 / PG1).